The sequence spans 51 residues: Large ribosomal subunit protein bL33 (51 aa).

The protein belongs to the bacterial ribosomal protein bL33 family.

The chain is Large ribosomal subunit protein bL33 from Methylococcus capsulatus (strain ATCC 33009 / NCIMB 11132 / Bath).